The chain runs to 466 residues: MNDLAISLPTPAAGAAAPRIGFVSLGCPKALTDSELILTQLSAEGYATSKTFQGADLVIVNTCGFIDDAVRESLDTIGEALAENGKVIVTGCLGAKTGDGGGNLVRQMHPSVLAVTGPHATQEVMDAVHQHVPKPHDPFVDLVPPAGIKLTPKHYAYLKISEGCNHRCSFCIIPSMRGDLVSRPIGDVLTEAQRLFEGGVKELLVISQDTSAYGVDVKYRTGFWDGKPVKTRMLDLVAQLGELARKHGAWVRLHYVYPYPHVDEVLPLMAEGLVLPYLDVPFQHAHPDVLKRMKRPASGERNLERLLKWREACPQIVVRSTFIAGFPGETEAEFEYLLDFLKEAQIDRAGCFAYSPIEGAPANLLDGALPDAVREERRARFMAVAEAVSTAKLQRRVGSSMQVLVDSAPAMGRKGGVGRSYADAPEIDGTVKILPPSKASKTMKVGEFSRVRIVGSQGHDLIGELI.

Residues 18–133 enclose the MTTase N-terminal domain; that stretch reads PRIGFVSLGC…VMDAVHQHVP (116 aa). Positions 27, 63, 92, 164, 168, and 171 each coordinate [4Fe-4S] cluster. Positions 150 to 391 constitute a Radical SAM core domain; the sequence is LTPKHYAYLK…MAVAEAVSTA (242 aa). Residues 394-466 form the TRAM domain; that stretch reads QRRVGSSMQV…QGHDLIGELI (73 aa).

Belongs to the methylthiotransferase family. RimO subfamily. The cofactor is [4Fe-4S] cluster.

It localises to the cytoplasm. It carries out the reaction L-aspartate(89)-[ribosomal protein uS12]-hydrogen + (sulfur carrier)-SH + AH2 + 2 S-adenosyl-L-methionine = 3-methylsulfanyl-L-aspartate(89)-[ribosomal protein uS12]-hydrogen + (sulfur carrier)-H + 5'-deoxyadenosine + L-methionine + A + S-adenosyl-L-homocysteine + 2 H(+). Functionally, catalyzes the methylthiolation of an aspartic acid residue of ribosomal protein uS12. This chain is Ribosomal protein uS12 methylthiotransferase RimO, found in Leptothrix cholodnii (strain ATCC 51168 / LMG 8142 / SP-6) (Leptothrix discophora (strain SP-6)).